A 301-amino-acid polypeptide reads, in one-letter code: Inosose dehydratase (301 aa).

It belongs to the IolE/MocC family. It depends on glutathione as a cofactor. Requires Co(2+) as cofactor. Mn(2+) is required as a cofactor.

The catalysed reaction is scyllo-inosose = 3D-3,5/4-trihydroxycyclohexane-1,2-dione + H2O. In terms of biological role, catalyzes the dehydration of inosose (2-keto-myo-inositol, 2KMI or 2,4,6/3,5-pentahydroxycyclohexanone) to 3D-(3,5/4)-trihydroxycyclohexane-1,2-dione (D-2,3-diketo-4-deoxy-epi-inositol). The chain is Inosose dehydratase from Salmonella typhimurium (strain LT2 / SGSC1412 / ATCC 700720).